Here is a 248-residue protein sequence, read N- to C-terminus: Proteasome subunit alpha (248 aa).

An N-acetylserine; partial modification is found at Ser-2.

The protein belongs to the peptidase T1A family. As to quaternary structure, the 20S proteasome core is composed of 14 alpha and 14 beta subunits that assemble into four stacked heptameric rings, resulting in a barrel-shaped structure. The two inner rings, each composed of seven catalytic beta subunits, are sandwiched by two outer rings, each composed of seven alpha subunits. The catalytic chamber with the active sites is on the inside of the barrel. Has a gated structure, the ends of the cylinder being occluded by the N-termini of the alpha-subunits. Is capped by the proteasome-associated ATPase, ARC.

It is found in the cytoplasm. It functions in the pathway protein degradation; proteasomal Pup-dependent pathway. The formation of the proteasomal ATPase ARC-20S proteasome complex, likely via the docking of the C-termini of ARC into the intersubunit pockets in the alpha-rings, may trigger opening of the gate for substrate entry. Interconversion between the open-gate and close-gate conformations leads to a dynamic regulation of the 20S proteasome proteolysis activity. Component of the proteasome core, a large protease complex with broad specificity involved in protein degradation. This Mycobacterium tuberculosis (strain CDC 1551 / Oshkosh) protein is Proteasome subunit alpha.